The sequence spans 348 residues: GTPase Obg 1 (348 aa).

Positions 1–159 (MSFVDEAKIH…HCVLLKLKIV (159 aa)) constitute an Obg domain. Residues 160-329 (SDVGIIGMPN…LHAQVKKAVV (170 aa)) enclose the OBG-type G domain. Residues 166–173 (GMPNAGKS), 191–195 (FTTLE), 212–215 (DIPG), 279–282 (NKCD), and 310–312 (GDE) contribute to the GTP site. Ser173 and Thr193 together coordinate Mg(2+).

The protein belongs to the TRAFAC class OBG-HflX-like GTPase superfamily. OBG GTPase family. In terms of assembly, monomer. Requires Mg(2+) as cofactor.

It is found in the cytoplasm. In terms of biological role, an essential GTPase which binds GTP, GDP and possibly (p)ppGpp with moderate affinity, with high nucleotide exchange rates and a fairly low GTP hydrolysis rate. Plays a role in control of the cell cycle, stress response, ribosome biogenesis and in those bacteria that undergo differentiation, in morphogenesis control. The chain is GTPase Obg 1 from Anaplasma marginale (strain St. Maries).